The chain runs to 398 residues: Aldo-keto reductase ausK (398 aa).

D76 lines the NADP(+) pocket. Y81 (proton donor) is an active-site residue. H156 contributes to the substrate binding site. NADP(+) is bound by residues 186-187 (CN), Q212, 241-251 (DALGSGKFQSR), and 317-325 (RKIQHLHDN).

Belongs to the aldo/keto reductase family. Aldo/keto reductase 2 subfamily. Homodimer.

It participates in secondary metabolite biosynthesis; terpenoid biosynthesis. Aldo-keto reductase; part of the gene cluster B that mediates the biosynthesis of austinol and dehydroaustinol, two fungal meroterpenoids. The first step of the pathway is the synthesis of 3,5-dimethylorsellinic acid by the polyketide synthase ausA. 3,5-dimethylorsellinic acid is then prenylated by the polyprenyl transferase ausN. Further epoxidation by the FAD-dependent monooxygenase ausM and cyclization by the probable terpene cyclase ausL lead to the formation of protoaustinoid A. Protoaustinoid A is then oxidized to spiro-lactone preaustinoid A3 by the combined action of the FAD-binding monooxygenases ausB and ausC, and the dioxygenase ausE. Acid-catalyzed keto-rearrangement and ring contraction of the tetraketide portion of preaustinoid A3 by ausJ lead to the formation of preaustinoid A4. The aldo-keto reductase ausK, with the help of ausH, is involved in the next step by transforming preaustinoid A4 into isoaustinone which is in turn hydroxylated by the P450 monooxygenase ausI to form austinolide. Finally, the cytochrome P450 monooxygenase ausG modifies austinolide to austinol. Austinol can be further modified to dehydroaustinol which forms a diffusible complex with diorcinol that initiates conidiation. Due to genetic rearrangements of the clusters and the subsequent loss of some enzymes, the end products of the Emericella nidulans austinoid biosynthesis clusters are austinol and dehydroaustinol, even if additional enzymes, such as the O-acetyltransferase ausQ and the cytochrome P450 monooxygenase ausR are still functional. This chain is Aldo-keto reductase ausK, found in Emericella nidulans (strain FGSC A4 / ATCC 38163 / CBS 112.46 / NRRL 194 / M139) (Aspergillus nidulans).